We begin with the raw amino-acid sequence, 232 residues long: Aprataxin-like protein (232 aa).

The HIT domain occupies 38 to 160; that stretch reads LKVYIESPES…MTLDHVSPSL (123 aa). Interaction with DNA stretches follow at residues 63 to 67, 138 to 149, and 161 to 165; these read DMFPK, HAGPSMNNLHLH, and KNSAH. The active-site Nucleophile is the His-147. Positions 200 and 203 each coordinate Zn(2+). Residues 209-212 are interaction with DNA; it reads RHFT. Positions 217 and 221 each coordinate Zn(2+).

In terms of assembly, monomer.

The protein resides in the nucleus. It localises to the cytoplasm. It carries out the reaction a 5'-end adenosine-5'-diphospho-5'-2'-deoxyribonucleoside-DNA + H2O = a 5'-end 5'-phospho-2'-deoxyribonucleoside-DNA + AMP + 2 H(+). The catalysed reaction is a 5'-end adenosine-5'-diphospho-5'-ribonucleoside-2'-deoxyribonucleotide-DNA + H2O = a 5'-end 5'-phospho-ribonucleoside-2'-deoxyribonucleotide-DNA + AMP + 2 H(+). It catalyses the reaction a 3'-end 2'-deoxyribonucleotide-3'-diphospho-5'-guanosine-DNA + H2O = a 3'-end 2'-deoxyribonucleotide 3'-phosphate-DNA + GMP + 2 H(+). Its function is as follows. DNA-binding protein involved in single-strand DNA break repair, double-strand DNA break repair and base excision repair. Resolves abortive DNA ligation intermediates formed either at base excision sites, or when DNA ligases attempt to repair non-ligatable breaks induced by reactive oxygen species. Catalyzes the release of adenylate groups covalently linked to 5'-phosphate termini, resulting in the production of 5'-phosphate termini that can be efficiently rejoined. Likewise, catalyzes the release of 3'-linked guanosine (DNAppG) and inosine (DNAppI) from DNA, but has higher specific activity with 5'-linked adenosine (AppDNA). The protein is Aprataxin-like protein (hnt3) of Schizosaccharomyces pombe (strain 972 / ATCC 24843) (Fission yeast).